Reading from the N-terminus, the 346-residue chain is MGAAATGTPLRIGTRGSLLAMTQAGTVRDALIAAGRPAELVVVKTPGDMSSDPVQKIGVGVFTSALRDELAAGTIDLAVHSYKDLPTAPDPRFVIAAIPPREDPRDALVARDGLVLGELPAGAKVGTSAPRRVAQLRALGLGLDIVPLRGNLDSRLARVTDGELDAVVVARAGLSRIGRTAVITEALEPVQMLPAPAQGALAVECRSEDAALIEALAELDDAATRAAVVAERALLAELEAGCTAPVGALAEVVESLDDDGRIVEELSLRGCAAAVDGSEVLRASVVGDPERAAELGRALARELLELGARELLVEVAATEPGARSGTGAVRPPETDLSNPSPMENPQ.

C242 carries the post-translational modification S-(dipyrrolylmethanemethyl)cysteine. A disordered region spans residues A317–Q346. Residues D335–Q346 are compositionally biased toward polar residues.

Belongs to the HMBS family. Monomer. It depends on dipyrromethane as a cofactor.

It carries out the reaction 4 porphobilinogen + H2O = hydroxymethylbilane + 4 NH4(+). It participates in porphyrin-containing compound metabolism; protoporphyrin-IX biosynthesis; coproporphyrinogen-III from 5-aminolevulinate: step 2/4. Tetrapolymerization of the monopyrrole PBG into the hydroxymethylbilane pre-uroporphyrinogen in several discrete steps. This is Porphobilinogen deaminase from Nocardia farcinica (strain IFM 10152).